Consider the following 479-residue polypeptide: Outer membrane protein OprJ (479 aa).

The signal sequence occupies residues 1 to 19 (MRKPAFGVSALLIALTLGA). Cys20 is lipidated: N-palmitoyl cysteine. Cys20 is lipidated: S-diacylglycerol cysteine. The disordered stretch occupies residues 102-121 (LNAAATGNRQRQPADLSAGN).

It belongs to the outer membrane factor (OMF) (TC 1.B.17) family.

The protein resides in the cell outer membrane. Its function is as follows. Channel-forming component of a multidrug resistance efflux pump. The polypeptide is Outer membrane protein OprJ (oprJ) (Pseudomonas aeruginosa (strain ATCC 15692 / DSM 22644 / CIP 104116 / JCM 14847 / LMG 12228 / 1C / PRS 101 / PAO1)).